The chain runs to 742 residues: UPF0313 protein MA_4618 (742 aa).

Residues 1–125 form a disordered region; that stretch reads MGVRKQTMVK…SFSSSLPASK (125 aa). A unknown region spans residues 1–128; that stretch reads MGVRKQTMVK…SSLPASKFLP (128 aa). 2 stretches are compositionally biased toward basic and acidic residues: residues 17-40 and 49-73; these read ENKK…ERAG and KKVE…KAEG. The span at 106 to 115 shows a compositional bias: basic residues; that stretch reads TGKKEKKQKK. Residues 129-742 are UPF0313; it reads MSPEEVKARG…KCLIRRKEKQ (614 aa). The Radical SAM core domain maps to 438-707; the sequence is ALEMVKFSLT…AMQRALMHYR (270 aa). [4Fe-4S] cluster is bound by residues Cys-452, Cys-456, and Cys-459.

The protein in the C-terminal section; belongs to the UPF0313 family. [4Fe-4S] cluster serves as cofactor.

This chain is UPF0313 protein MA_4618, found in Methanosarcina acetivorans (strain ATCC 35395 / DSM 2834 / JCM 12185 / C2A).